We begin with the raw amino-acid sequence, 464 residues long: Siroheme synthase (464 aa).

A precorrin-2 dehydrogenase /sirohydrochlorin ferrochelatase region spans residues 1–203; that stretch reads MKYLPLFHNL…GQGAEAERLL (203 aa). NAD(+) contacts are provided by residues 22 to 23 and 43 to 44; these read EI and PE. Serine 128 bears the Phosphoserine mark. The segment at 216–464 is uroporphyrinogen-III C-methyltransferase; the sequence is GEVYLVGAGP…AWFEGAQGQI (249 aa). Proline 225 lines the S-adenosyl-L-methionine pocket. The active-site Proton acceptor is aspartate 248. Residue lysine 270 is the Proton donor of the active site. S-adenosyl-L-methionine contacts are provided by residues 301–303, isoleucine 306, 331–332, methionine 383, and glycine 412; these read GGD and TA.

This sequence in the N-terminal section; belongs to the precorrin-2 dehydrogenase / sirohydrochlorin ferrochelatase family. The protein in the C-terminal section; belongs to the precorrin methyltransferase family.

The enzyme catalyses uroporphyrinogen III + 2 S-adenosyl-L-methionine = precorrin-2 + 2 S-adenosyl-L-homocysteine + H(+). The catalysed reaction is precorrin-2 + NAD(+) = sirohydrochlorin + NADH + 2 H(+). It catalyses the reaction siroheme + 2 H(+) = sirohydrochlorin + Fe(2+). Its pathway is cofactor biosynthesis; adenosylcobalamin biosynthesis; precorrin-2 from uroporphyrinogen III: step 1/1. It functions in the pathway cofactor biosynthesis; adenosylcobalamin biosynthesis; sirohydrochlorin from precorrin-2: step 1/1. It participates in porphyrin-containing compound metabolism; siroheme biosynthesis; precorrin-2 from uroporphyrinogen III: step 1/1. The protein operates within porphyrin-containing compound metabolism; siroheme biosynthesis; siroheme from sirohydrochlorin: step 1/1. Its pathway is porphyrin-containing compound metabolism; siroheme biosynthesis; sirohydrochlorin from precorrin-2: step 1/1. Functionally, multifunctional enzyme that catalyzes the SAM-dependent methylations of uroporphyrinogen III at position C-2 and C-7 to form precorrin-2 via precorrin-1. Then it catalyzes the NAD-dependent ring dehydrogenation of precorrin-2 to yield sirohydrochlorin. Finally, it catalyzes the ferrochelation of sirohydrochlorin to yield siroheme. The protein is Siroheme synthase of Pseudomonas fluorescens (strain Pf0-1).